The following is a 427-amino-acid chain: Ribitol transporter (427 aa).

Residues 1 to 7 (MSVNNKQ) lie on the Cytoplasmic side of the membrane. Residues 8–28 (WYGLPLNLIWGYVAIAVFMTG) traverse the membrane as a helical segment. Residues 29-51 (DGFELAFLSHYIKALGFTPAQAS) lie on the Extracellular side of the membrane. Residues 52–72 (FAFTLYGLAAALSAWVSGVVA) traverse the membrane as a helical segment. Over 73–79 (EIITPRK) the chain is Cytoplasmic. The helical transmembrane segment at 80–100 (AMLIGFVLWCVFHVLFLVFGL) threads the bilayer. The Extracellular segment spans residues 101–107 (GRANYAL). The helical transmembrane segment at 108–128 (ILLFYGIRGLAYPLFLYSFIV) threads the bilayer. Over 129-141 (AIIHNVRSDSSSS) the chain is Cytoplasmic. Residues 142 to 162 (ALGWFWAVYSVGIGVFGSYIP) form a helical membrane-spanning segment. Topologically, residues 163–171 (SFTIPHIGE) are extracellular. Residues 172 to 192 (MGTLWLALLFCATGGIIALVS) traverse the membrane as a helical segment. At 193 to 238 (MRHTETPRHMQNLTTREKFAELGRAATLLYTNRSILFSSIVRIINT) the chain is on the cytoplasmic side. The helical transmembrane segment at 239–259 (LSLFGFAVIMPMMFVDELGFT) threads the bilayer. The Extracellular portion of the chain corresponds to 260-263 (TSEW). A helical transmembrane segment spans residues 264 to 284 (LQVWAAFFFTTIFSNVFWGIV). The Cytoplasmic segment spans residues 285–295 (AEKMGWMKVIR). Residues 296–316 (WFGCIGMALSSLAFYYLPQHF) form a helical membrane-spanning segment. The Extracellular segment spans residues 317-323 (GHNFAMA). Residues 324-344 (LVPAIALGIFVAAFVPMAAVF) form a helical membrane-spanning segment. Residues 345–360 (PALEPNHKGAAISVYN) are Cytoplasmic-facing. The chain crosses the membrane as a helical span at residues 361 to 381 (LSAGLSNFLAPAIAVVLLPYF). The Extracellular segment spans residues 382–383 (ST). Residues 384-404 (IGVVIAYTALYILAFFLCPLI) traverse the membrane as a helical segment. At 405–427 (RVEQPGFTSDQHAKPFTANAAES) the chain is on the cytoplasmic side.

The protein belongs to the major facilitator superfamily. Sugar transporter (TC 2.A.1.1) family. CsbX subfamily.

The protein resides in the cell membrane. The polypeptide is Ribitol transporter (rbtT) (Klebsiella pneumoniae).